We begin with the raw amino-acid sequence, 398 residues long: NADH-quinone oxidoreductase subunit D (398 aa).

The protein belongs to the complex I 49 kDa subunit family. In terms of assembly, NDH-1 is composed of 14 different subunits. Subunits NuoB, C, D, E, F, and G constitute the peripheral sector of the complex.

Its subcellular location is the cell inner membrane. It catalyses the reaction a quinone + NADH + 5 H(+)(in) = a quinol + NAD(+) + 4 H(+)(out). Functionally, NDH-1 shuttles electrons from NADH, via FMN and iron-sulfur (Fe-S) centers, to quinones in the respiratory chain. The immediate electron acceptor for the enzyme in this species is believed to be ubiquinone. Couples the redox reaction to proton translocation (for every two electrons transferred, four hydrogen ions are translocated across the cytoplasmic membrane), and thus conserves the redox energy in a proton gradient. The chain is NADH-quinone oxidoreductase subunit D from Caulobacter vibrioides (strain ATCC 19089 / CIP 103742 / CB 15) (Caulobacter crescentus).